The primary structure comprises 128 residues: Large ribosomal subunit protein bL12 (128 aa).

The protein belongs to the bacterial ribosomal protein bL12 family. As to quaternary structure, homodimer. Part of the ribosomal stalk of the 50S ribosomal subunit. Forms a multimeric L10(L12)X complex, where L10 forms an elongated spine to which 2 to 4 L12 dimers bind in a sequential fashion. Binds GTP-bound translation factors.

Forms part of the ribosomal stalk which helps the ribosome interact with GTP-bound translation factors. Is thus essential for accurate translation. The polypeptide is Large ribosomal subunit protein bL12 (Picosynechococcus sp. (strain ATCC 27264 / PCC 7002 / PR-6) (Agmenellum quadruplicatum)).